Consider the following 862-residue polypeptide: AP-1 complex subunit gamma-2 (862 aa).

11 HEAT repeats span residues 1-28 (MNPF…EERA), 29-65 (VVRK…LGYP), 101-136 (EVLM…CSAE), 137-173 (MARD…KVPD), 308-345 (GLRV…VDSQ), 346-382 (AVQR…ENNV), 384-417 (PLAK…KFAP), 418-454 (EKIW…NAPD), 458-496 (YTVR…NNAG), 507-545 (TESD…RFPS), and 560-599 (SFVL…ATFS). The 116-residue stretch at 744–859 (AAYPSIVAFE…LEEGQINNFP (116 aa)) folds into the GAE domain.

It belongs to the adaptor complexes large subunit family. In terms of assembly, adaptor protein complex 1 (AP-1) is a heterotetramer composed of two large adaptins (gamma-type subunit and beta-type subunit), a medium adaptin (mu-type subunit) and a small adaptin (sigma-type subunit).

It is found in the golgi apparatus. The protein localises to the cytoplasmic vesicle. Its subcellular location is the clathrin-coated vesicle membrane. Subunit of clathrin-associated adaptor protein complex 1 that plays a role in protein sorting at the trans-Golgi network and early endosomes (TGN/EE). The AP complexes mediate both the recruitment of clathrin to membranes and the recognition of sorting signals within the cytosolic tails of transmembrane cargo molecules. This Arabidopsis thaliana (Mouse-ear cress) protein is AP-1 complex subunit gamma-2.